A 72-amino-acid chain; its full sequence is Translation initiation factor IF-1 (72 aa).

The S1-like domain occupies Met1 to Lys72.

This sequence belongs to the IF-1 family. Component of the 30S ribosomal translation pre-initiation complex which assembles on the 30S ribosome in the order IF-2 and IF-3, IF-1 and N-formylmethionyl-tRNA(fMet); mRNA recruitment can occur at any time during PIC assembly.

It is found in the cytoplasm. One of the essential components for the initiation of protein synthesis. Stabilizes the binding of IF-2 and IF-3 on the 30S subunit to which N-formylmethionyl-tRNA(fMet) subsequently binds. Helps modulate mRNA selection, yielding the 30S pre-initiation complex (PIC). Upon addition of the 50S ribosomal subunit IF-1, IF-2 and IF-3 are released leaving the mature 70S translation initiation complex. In Vesicomyosocius okutanii subsp. Calyptogena okutanii (strain HA), this protein is Translation initiation factor IF-1.